A 314-amino-acid chain; its full sequence is Cell division protein FtsQ (314 aa).

Composition is skewed to basic and acidic residues over residues Met1–Asp15 and Glu30–Ala57. The tract at residues Met1–Ala57 is disordered. Over Met1–Lys99 the chain is Cytoplasmic. A helical transmembrane segment spans residues Ala100–Phe120. At Thr121–Lys314 the chain is on the extracellular side. The region spanning Met124–Arg192 is the POTRA domain.

The protein belongs to the FtsQ/DivIB family. FtsQ subfamily.

Its subcellular location is the cell membrane. In terms of biological role, essential cell division protein. This is Cell division protein FtsQ from Mycobacterium bovis (strain ATCC BAA-935 / AF2122/97).